We begin with the raw amino-acid sequence, 131 residues long: Profilin-1 (131 aa).

The protein belongs to the profilin family. In terms of assembly, occurs in many kinds of cells as a complex with monomeric actin in a 1:1 ratio.

The protein localises to the cytoplasm. It is found in the cytoskeleton. Binds to actin and affects the structure of the cytoskeleton. At high concentrations, profilin prevents the polymerization of actin, whereas it enhances it at low concentrations. By binding to PIP2, it inhibits the formation of IP3 and DG. This is Profilin-1 from Hevea brasiliensis (Para rubber tree).